Consider the following 288-residue polypeptide: NAD kinase (288 aa).

The active-site Proton acceptor is the D73. Residues 73-74 (DG), R78, 144-145 (NE), D174, 185-190 (TAYSLS), and A209 each bind NAD(+).

Belongs to the NAD kinase family. A divalent metal cation is required as a cofactor.

It is found in the cytoplasm. The enzyme catalyses NAD(+) + ATP = ADP + NADP(+) + H(+). Its function is as follows. Involved in the regulation of the intracellular balance of NAD and NADP, and is a key enzyme in the biosynthesis of NADP. Catalyzes specifically the phosphorylation on 2'-hydroxyl of the adenosine moiety of NAD to yield NADP. The sequence is that of NAD kinase from Porphyromonas gingivalis (strain ATCC BAA-308 / W83).